A 113-amino-acid polypeptide reads, in one-letter code: Small ribosomal subunit protein uS14m (113 aa).

It belongs to the universal ribosomal protein uS14 family. In terms of assembly, component of the mitochondrial small ribosomal subunit (mt-SSU). Mature N.crassa 74S mitochondrial ribosomes consist of a small (37S) and a large (54S) subunit. The 37S small subunit contains a 16S ribosomal RNA (16S mt-rRNA) and 32 different proteins. The 54S large subunit contains a 23S rRNA (23S mt-rRNA) and 42 different proteins.

Its subcellular location is the mitochondrion. Its function is as follows. Component of the mitochondrial ribosome (mitoribosome), a dedicated translation machinery responsible for the synthesis of mitochondrial genome-encoded proteins, including at least some of the essential transmembrane subunits of the mitochondrial respiratory chain. The mitoribosomes are attached to the mitochondrial inner membrane and translation products are cotranslationally integrated into the membrane. The polypeptide is Small ribosomal subunit protein uS14m (mrp2) (Neurospora crassa (strain ATCC 24698 / 74-OR23-1A / CBS 708.71 / DSM 1257 / FGSC 987)).